We begin with the raw amino-acid sequence, 476 residues long: Lactate utilization protein B (476 aa).

4Fe-4S ferredoxin-type domains lie at 304-334 (GTEF…GHSY) and 353-382 (YDEY…LHEL). Positions 313, 316, 319, 323, 366, 369, and 373 each coordinate [4Fe-4S] cluster.

Belongs to the LutB/YkgF family.

Is involved in L-lactate degradation and allows cells to grow with lactate as the sole carbon source. Has probably a role as an electron transporter during oxidation of L-lactate. This is Lactate utilization protein B from Bacillus velezensis (strain DSM 23117 / BGSC 10A6 / LMG 26770 / FZB42) (Bacillus amyloliquefaciens subsp. plantarum).